The chain runs to 887 residues: DNA gyrase subunit A (887 aa).

The region spanning 35–501 (LPDVRDGLKP…GFEDLEDEDL (467 aa)) is the Topo IIA-type catalytic domain. The active-site O-(5'-phospho-DNA)-tyrosine intermediate is Tyr-123. Positions 528–534 (QNRGGRG) match the GyrA-box motif. Residues 811–865 (KEDAEDETNEDEQSTSTVSEDGTEQQREAVVNDETPGNAIHTEVIDSEENDEDGR) are disordered. Residues 813–823 (DAEDETNEDEQ) are compositionally biased toward acidic residues.

The protein belongs to the type II topoisomerase GyrA/ParC subunit family. In terms of assembly, heterotetramer, composed of two GyrA and two GyrB chains. In the heterotetramer, GyrA contains the active site tyrosine that forms a transient covalent intermediate with DNA, while GyrB binds cofactors and catalyzes ATP hydrolysis.

It localises to the cytoplasm. The enzyme catalyses ATP-dependent breakage, passage and rejoining of double-stranded DNA.. Its function is as follows. A type II topoisomerase that negatively supercoils closed circular double-stranded (ds) DNA in an ATP-dependent manner to modulate DNA topology and maintain chromosomes in an underwound state. Negative supercoiling favors strand separation, and DNA replication, transcription, recombination and repair, all of which involve strand separation. Also able to catalyze the interconversion of other topological isomers of dsDNA rings, including catenanes and knotted rings. Type II topoisomerases break and join 2 DNA strands simultaneously in an ATP-dependent manner. In Staphylococcus aureus (strain MSSA476), this protein is DNA gyrase subunit A.